A 360-amino-acid polypeptide reads, in one-letter code: Glycoprotein-N-acetylgalactosamine 3-beta-galactosyltransferase 1 (360 aa).

Topologically, residues 1–7 (MSIICAK) are cytoplasmic. Residues 8 to 28 (VAWLPLTLGTAMGFLITFYLA) form a helical; Signal-anchor for type II membrane protein membrane-spanning segment. Over 29 to 360 (RTLLERNSQP…SDFLEPPMES (332 aa)) the chain is Lumenal. Cys79 and Cys103 form a disulfide bridge. The UDP site is built by Met82, Glu126, Gly127, Arg128, and Lys134. A glycan (N-linked (GlcNAc...) asparagine) is linked at Asn148. Asp157 contacts UDP. Mn(2+)-binding residues include Asp157 and Asp159. Residue Asn173 is glycosylated (N-linked (GlcNAc...) asparagine). Cys220 and Cys234 are disulfide-bonded. Trp274 contributes to the a glycoprotein binding site. Cys289 and Cys290 are oxidised to a cystine. 2 residues coordinate UDP: His298 and Tyr299. His298 contacts Mn(2+). Asn341 and Asn347 each carry an N-linked (GlcNAc...) asparagine glycan.

Belongs to the glycosyltransferase 31 family. Beta3-Gal-T subfamily. Homodimer; disulfide-linked. The cofactor is Mn(2+).

The protein localises to the membrane. The catalysed reaction is an N-acetyl-alpha-D-galactosaminyl derivative + UDP-alpha-D-galactose = a beta-D-galactosyl-(1-&gt;3)-N-acetyl-alpha-D-galactosaminyl derivative + UDP + H(+). The protein operates within protein modification; protein glycosylation. Glycosyltransferase that generates the core 1 O-glycan Gal-beta1-3GalNAc-alpha1-Ser/Thr (T antigen), which is a precursor for many extended O-glycans in glycoproteins. This Xenopus laevis (African clawed frog) protein is Glycoprotein-N-acetylgalactosamine 3-beta-galactosyltransferase 1 (c1galt1).